We begin with the raw amino-acid sequence, 473 residues long: MSNIYIQEPPTNGKVLLKTTAGDIDIELWSKEAPKACRNFIQLCLEAYYDNTIFHRVVPGFIVQGGDPTGTGSGGESIYGAPFKDEFHSRLRFNRRGLVAMANAGSHDNGSQFFFTLGRADELNNKHTIFGKVTGDTVYNMLRLSEVDIDDEERPHNPHKIKSCEVLFNPFDDIIPREIKRPKKEKPEEEVKKLKPKGTKNFSLLSFGEEAEEEEEEVNRVSQSMKGKSKSSHDLLKDDPHLSSVPVVESEKGDAAGDLDDDGEDESAEYDEYVDGDEKNLMRERIAKKLKKDTSANVKSAGEGEVEKKSVSRSEELRKEARQLKRELLAAKQKKVENEAKQAEKRSEEEEATPDGAVAEYRREKQKYEALRKQQSKKGTSREDQTLALLNQFKSKLTQAIAETPENDIPETEVEDDEGWMSHVLQFEDKSRKVKDASMQDSDTFEIYDPRNPVNKRRREESKKLMREKKERR.

The residue at position 2 (S2) is an N-acetylserine. The region spanning 11–166 is the PPIase cyclophilin-type domain; that stretch reads TNGKVLLKTT…NPHKIKSCEV (156 aa). Basic and acidic residues predominate over residues 177-193; that stretch reads REIKRPKKEKPEEEVKK. Disordered regions lie at residues 177–386 and 399–473; these read REIK…EDQT and QAIA…KERR. The stretch at 206 to 230 forms a coiled coil; it reads SFGEEAEEEEEEVNRVSQSMKGKSK. Residues 231-241 are compositionally biased toward basic and acidic residues; the sequence is SSHDLLKDDPH. Residues 257–275 show a composition bias toward acidic residues; that stretch reads GDLDDDGEDESAEYDEYVD. Composition is skewed to basic and acidic residues over residues 276–287, 305–348, and 360–372; these read GDEKNLMRERIA, EVEK…KRSE, and EYRREKQKYEALR. Positions 307–378 form a coiled coil; that stretch reads EKKSVSRSEE…EALRKQQSKK (72 aa). S347 carries the phosphoserine modification. Over residues 405 to 419 the composition is skewed to acidic residues; sequence PENDIPETEVEDDEG. 2 stretches are compositionally biased toward basic and acidic residues: residues 426-438 and 458-473; these read QFEDKSRKVKDAS and RREESKKLMREKKERR.

The protein belongs to the cyclophilin-type PPIase family. In terms of assembly, part of the activated spliceosome B/catalytic step 1 spliceosome, one of the forms of the spliceosome which has a well-formed active site but still cannot catalyze the branching reaction and is composed at least of 52 proteins, the U2, U5 and U6 snRNAs and the pre-mRNA. Recruited during early steps of activated spliceosome B maturation, it is probably one of the first proteins released from this complex as he matures to the spliceosome C complex. Component of the minor spliceosome, which splices U12-type introns.

It is found in the nucleus. Functionally, as part of the spliceosome, plays a role in pre-mRNA splicing. Probable inactive PPIase with no peptidyl-prolyl cis-trans isomerase activity. As a component of the minor spliceosome, involved in the splicing of U12-type introns in pre-mRNAs. The polypeptide is Spliceosome-associated protein CWC27 homolog (Macaca fascicularis (Crab-eating macaque)).